A 149-amino-acid chain; its full sequence is Transcriptional repressor NrdR (149 aa).

The segment at 3-34 is a zinc-finger region; it reads CPFCDTEETKVIDSRLVSDGYQVRRRRECGHC. An ATP-cone domain is found at 49-139; it reads PKIIKTDGTR…VYLSFDDIDQ (91 aa).

This sequence belongs to the NrdR family. Zn(2+) is required as a cofactor.

Functionally, negatively regulates transcription of bacterial ribonucleotide reductase nrd genes and operons by binding to NrdR-boxes. The protein is Transcriptional repressor NrdR of Haemophilus influenzae (strain 86-028NP).